The chain runs to 118 residues: MIPGELRVNDDLGQIELNVGRTTQTLSVANYGDRPIQVGSHYHFYEVNEALHFDREATKGFRLNIPAGMAIRFEPGQRRTIELVEFAGKREIYGFQAAIMGNVDKHITTTIPDDKEVK.

It belongs to the urease beta subunit family. As to quaternary structure, heterotrimer of UreA (gamma), UreB (beta) and UreC (alpha) subunits. Three heterotrimers associate to form the active enzyme.

It is found in the cytoplasm. The enzyme catalyses urea + 2 H2O + H(+) = hydrogencarbonate + 2 NH4(+). The protein operates within nitrogen metabolism; urea degradation; CO(2) and NH(3) from urea (urease route): step 1/1. This is Urease subunit beta from Aliivibrio fischeri (strain ATCC 700601 / ES114) (Vibrio fischeri).